A 92-amino-acid chain; its full sequence is Cell division topological specificity factor (92 aa).

This sequence belongs to the MinE family.

Functionally, prevents the cell division inhibition by proteins MinC and MinD at internal division sites while permitting inhibition at polar sites. This ensures cell division at the proper site by restricting the formation of a division septum at the midpoint of the long axis of the cell. The chain is Cell division topological specificity factor from Syntrophobacter fumaroxidans (strain DSM 10017 / MPOB).